Here is a 207-residue protein sequence, read N- to C-terminus: Thiamine-phosphate synthase (207 aa).

4-amino-2-methyl-5-(diphosphooxymethyl)pyrimidine-binding positions include 36–40 (QLRIK) and D68. Mg(2+) is bound by residues D69 and D88. S106 is a binding site for 4-amino-2-methyl-5-(diphosphooxymethyl)pyrimidine. 132-134 (TQT) provides a ligand contact to 2-[(2R,5Z)-2-carboxy-4-methylthiazol-5(2H)-ylidene]ethyl phosphate. K135 provides a ligand contact to 4-amino-2-methyl-5-(diphosphooxymethyl)pyrimidine. Residues G162 and 182 to 183 (VS) contribute to the 2-[(2R,5Z)-2-carboxy-4-methylthiazol-5(2H)-ylidene]ethyl phosphate site.

It belongs to the thiamine-phosphate synthase family. The cofactor is Mg(2+).

It carries out the reaction 2-[(2R,5Z)-2-carboxy-4-methylthiazol-5(2H)-ylidene]ethyl phosphate + 4-amino-2-methyl-5-(diphosphooxymethyl)pyrimidine + 2 H(+) = thiamine phosphate + CO2 + diphosphate. The enzyme catalyses 2-(2-carboxy-4-methylthiazol-5-yl)ethyl phosphate + 4-amino-2-methyl-5-(diphosphooxymethyl)pyrimidine + 2 H(+) = thiamine phosphate + CO2 + diphosphate. It catalyses the reaction 4-methyl-5-(2-phosphooxyethyl)-thiazole + 4-amino-2-methyl-5-(diphosphooxymethyl)pyrimidine + H(+) = thiamine phosphate + diphosphate. Its pathway is cofactor biosynthesis; thiamine diphosphate biosynthesis; thiamine phosphate from 4-amino-2-methyl-5-diphosphomethylpyrimidine and 4-methyl-5-(2-phosphoethyl)-thiazole: step 1/1. Condenses 4-methyl-5-(beta-hydroxyethyl)thiazole monophosphate (THZ-P) and 2-methyl-4-amino-5-hydroxymethyl pyrimidine pyrophosphate (HMP-PP) to form thiamine monophosphate (TMP). The chain is Thiamine-phosphate synthase from Pyrococcus horikoshii (strain ATCC 700860 / DSM 12428 / JCM 9974 / NBRC 100139 / OT-3).